Consider the following 609-residue polypeptide: Serine/threonine-protein phosphatase 4 regulatory subunit 2 (609 aa).

Serine 68 carries the phosphoserine modification. The segment at 175–569 (NNNGNADEGS…EEARVSPSAT (395 aa)) is disordered. A compositionally biased stretch (low complexity) spans 183–194 (GSSPGAGSAGCA). A compositionally biased stretch (basic and acidic residues) spans 201–225 (RSDDNDQPKAKKAKLEIDGEERSEA). A phosphoserine mark is found at serine 223 and serine 226. Residues 233-244 (VATRVKNEKDEK) show a composition bias toward basic and acidic residues. Serine 252 bears the Phosphoserine mark. Positions 258 to 270 (EIEEPDEEVDEAD) are enriched in acidic residues. Composition is skewed to basic and acidic residues over residues 310 to 351 (IEAE…KPDG) and 375 to 400 (EPVK…KQDD). Positions 401–410 (IDSTETDDAP) are enriched in acidic residues. Residues 414–462 (KPAEEKIASSESKPKTKSEDDPEAETKKSQPEKTETEAAEKSVSDEKQA) show a composition bias toward basic and acidic residues. The residue at position 602 (threonine 602) is a Phosphothreonine. The residue at position 603 (serine 603) is a Phosphoserine.

This sequence belongs to the PPP4R2 family. Serine/threonine-protein phosphatase 4 (PP4) occurs in different assemblies of the catalytic and one or more regulatory subunits. Probably part of a PP4 PPP4C-PPP4R2-PPP4R3 complex containing Pp4-19C, PPP4R2r and flfl.

Functionally, regulatory subunit of serine/threonine-protein phosphatase 4 (PP4). The probable PP4 complex Pp4-19C-PPP4R2r-flfl (PPP4C-PPP4R2-PPP4R3) is required to prevent caspase induced cell death (in vitro). The protein is Serine/threonine-protein phosphatase 4 regulatory subunit 2 (PPP4R2r) of Drosophila melanogaster (Fruit fly).